We begin with the raw amino-acid sequence, 1327 residues long: Putative ATP-dependent RNA helicase ucp12 (1327 aa).

Disordered regions lie at residues 1-58 (MGSK…KQLV) and 201-222 (QAAR…NEKV). Residues 18-41 (SKNKEKNIKGKKKNSLDPIEKNKQ) are compositionally biased toward basic and acidic residues. A compositionally biased stretch (polar residues) spans 42–58 (ETAGLQTTSRPTAKQLV). The region spanning 276-315 (EPDTSIVNDLISLGFRDIHAKEACQYCVSLEDALEWLIIH) is the UBA domain. The 100-residue stretch at 405–504 (DDVSALQSIL…NHLQENIEDF (100 aa)) folds into the RWD domain. The 170-residue stretch at 587 to 756 (MDAIQHSQVV…FGNAGHLHIH (170 aa)) folds into the Helicase ATP-binding domain. 600–607 (GETGSGKS) is an ATP binding site. Residues 703 to 706 (DEVH) carry the DEAH box motif. The region spanning 797 to 968 (LISRLVSSID…QVCLNVVPLV (172 aa)) is the Helicase C-terminal domain.

The protein belongs to the DEAD box helicase family. DEAH subfamily.

The protein localises to the cytoplasm. The catalysed reaction is ATP + H2O = ADP + phosphate + H(+). Its function is as follows. Probable ATP-binding RNA helicase. This Schizosaccharomyces pombe (strain 972 / ATCC 24843) (Fission yeast) protein is Putative ATP-dependent RNA helicase ucp12 (ucp12).